The sequence spans 202 residues: Transcriptional regulator SdrP (202 aa).

An HTH crp-type domain is found at 117 to 189; that stretch reads QRLKNRMAAA…YGKIQLLDLK (73 aa). A DNA-binding region (H-T-H motif) is located at residues 149 to 168; the sequence is HDELAAAVGSVRETVTKVIG.

In terms of assembly, homodimer.

In terms of biological role, activates transcription. The consensus DNA-binding site of this transcriptional regulator is 5'-WWGTGAN(5-7)ACACWW-3' in which W is A or T and N is G, A, T or C. Regulated genes include those encoding proteins involved in nutrient and energy supply, redox control and polyadenylation of mRNA. Also regulates genes involved in oxidative stress response such as genes encoding manganese superoxide dismutase and catalase, and genes encoding a protein involved in nucleotide excision repair of damaged DNA and putative proteins involved in redox control, protein degradation and transcriptional regulation. The polypeptide is Transcriptional regulator SdrP (Thermus thermophilus (strain ATCC 27634 / DSM 579 / HB8)).